Here is a 140-residue protein sequence, read N- to C-terminus: 6,7-dimethyl-8-ribityllumazine synthase (140 aa).

5-amino-6-(D-ribitylamino)uracil contacts are provided by residues F11, 42 to 44 (ALE), and 66 to 68 (VVI). 71 to 72 (ET) serves as a coordination point for (2S)-2-hydroxy-3-oxobutyl phosphate. The Proton donor role is filled by H74. N98 contacts 5-amino-6-(D-ribitylamino)uracil. R112 contributes to the (2S)-2-hydroxy-3-oxobutyl phosphate binding site.

Belongs to the DMRL synthase family.

It carries out the reaction (2S)-2-hydroxy-3-oxobutyl phosphate + 5-amino-6-(D-ribitylamino)uracil = 6,7-dimethyl-8-(1-D-ribityl)lumazine + phosphate + 2 H2O + H(+). It functions in the pathway cofactor biosynthesis; riboflavin biosynthesis; riboflavin from 2-hydroxy-3-oxobutyl phosphate and 5-amino-6-(D-ribitylamino)uracil: step 1/2. Catalyzes the formation of 6,7-dimethyl-8-ribityllumazine by condensation of 5-amino-6-(D-ribitylamino)uracil with 3,4-dihydroxy-2-butanone 4-phosphate. This is the penultimate step in the biosynthesis of riboflavin. The sequence is that of 6,7-dimethyl-8-ribityllumazine synthase from Erythrobacter litoralis (strain HTCC2594).